The chain runs to 89 residues: Small ribosomal subunit protein uS17 (89 aa).

It belongs to the universal ribosomal protein uS17 family. In terms of assembly, part of the 30S ribosomal subunit.

Functionally, one of the primary rRNA binding proteins, it binds specifically to the 5'-end of 16S ribosomal RNA. In Syntrophomonas wolfei subsp. wolfei (strain DSM 2245B / Goettingen), this protein is Small ribosomal subunit protein uS17.